We begin with the raw amino-acid sequence, 585 residues long: Sodium/calcium exchanger NCL (585 aa).

A run of 5 helical transmembrane segments spans residues 83-103, 106-126, 149-169, 212-232, and 239-259; these read VFLILVYGFLMFTAATYLSAG, LLLEILGPGIVGGLFLPMLGA, VSVGMGLLAGSTVMLLTVIWG, IMAISVIPFVIVQLPQMLGST, and VLIALILSVLMLISYCVYQVF. 2 consecutive EF-hand domains span residues 299-334 and 339-374; these read PDEHVIRKLFLTIDANNDGHLSAAELKALIIGISFE and DKDDAVGKVLQDFDKTLDEQVDQEEFVRGIKQWLIQ. Residues Asp-312, Asn-314, Asp-316, His-318, Glu-323, Asp-352, Asp-356, Gln-358, and Glu-363 each coordinate Ca(2+). The next 2 helical transmembrane spans lie at 427-447 and 457-477; these read WITIKAALLLLLGAAIAAAFA and FSAATGIPSFFISFIALPLAT. A glycan (N-linked (GlcNAc...) asparagine) is linked at Asn-478. The next 3 helical transmembrane spans lie at 505–525, 532–552, and 558–578; these read CGGVTMNNILCLSVFLAIVYV, FSSEVLVILIVCLVMGGFASF, and LWTCFIAYLLYPFSLGLVYIL.

The protein belongs to the Ca(2+):cation antiporter (CaCA) (TC 2.A.19) family. In terms of tissue distribution, expressed in roots, leaves, stems, petals, stamens, ovules and siliques.

It is found in the cell membrane. It localises to the vacuole membrane. Functionally, possesses sodium/calcium exchanger (NCX) activity when expressed in a heterologous mammalian CHO-K1 cell system. Does not possess cation/proton exchanger (CAX) or sodium/proton (NHX) activity when expressed in a heterologous yeast cell system. Has the ability to bind calcium in vitro. Participates in the maintenance of calcium homeostasis. May play a role in auxin response, diurnal rhythm and flowering time. Involved in salt stress response. This Arabidopsis thaliana (Mouse-ear cress) protein is Sodium/calcium exchanger NCL.